A 389-amino-acid polypeptide reads, in one-letter code: Succinate--CoA ligase [ADP-forming] subunit beta (389 aa).

In terms of domain architecture, ATP-grasp spans 9–236 (KELFASHGVP…KDAEDPLEAK (228 aa)). ATP is bound by residues lysine 45, 52–54 (GRG), serine 94, and glutamate 99. Mg(2+) is bound by residues asparagine 191 and aspartate 205. Residues asparagine 256 and 318-320 (GIT) each bind substrate.

This sequence belongs to the succinate/malate CoA ligase beta subunit family. In terms of assembly, heterotetramer of two alpha and two beta subunits. The cofactor is Mg(2+).

It carries out the reaction succinate + ATP + CoA = succinyl-CoA + ADP + phosphate. The enzyme catalyses GTP + succinate + CoA = succinyl-CoA + GDP + phosphate. It functions in the pathway carbohydrate metabolism; tricarboxylic acid cycle; succinate from succinyl-CoA (ligase route): step 1/1. Functionally, succinyl-CoA synthetase functions in the citric acid cycle (TCA), coupling the hydrolysis of succinyl-CoA to the synthesis of either ATP or GTP and thus represents the only step of substrate-level phosphorylation in the TCA. The beta subunit provides nucleotide specificity of the enzyme and binds the substrate succinate, while the binding sites for coenzyme A and phosphate are found in the alpha subunit. The sequence is that of Succinate--CoA ligase [ADP-forming] subunit beta from Saccharopolyspora erythraea (strain ATCC 11635 / DSM 40517 / JCM 4748 / NBRC 13426 / NCIMB 8594 / NRRL 2338).